Consider the following 135-residue polypeptide: ATP synthase epsilon chain (135 aa).

A compositionally biased stretch (basic and acidic residues) spans 89-100 (SGKAEAELEKAK). The interval 89 to 114 (SGKAEAELEKAKNQLSQNKDQGNSPE) is disordered. The segment covering 101-112 (NQLSQNKDQGNS) has biased composition (polar residues).

Belongs to the ATPase epsilon chain family. As to quaternary structure, F-type ATPases have 2 components, CF(1) - the catalytic core - and CF(0) - the membrane proton channel. CF(1) has five subunits: alpha(3), beta(3), gamma(1), delta(1), epsilon(1). CF(0) has three main subunits: a, b and c.

The protein localises to the cellular thylakoid membrane. In terms of biological role, produces ATP from ADP in the presence of a proton gradient across the membrane. In Prochlorococcus marinus (strain NATL2A), this protein is ATP synthase epsilon chain.